The chain runs to 212 residues: 3-demethoxyubiquinol 3-hydroxylase (212 aa).

Residues E61, E91, H94, E143, E175, and H178 each contribute to the Fe cation site.

This sequence belongs to the COQ7 family. Requires Fe cation as cofactor.

The protein localises to the cell membrane. The catalysed reaction is a 5-methoxy-2-methyl-3-(all-trans-polyprenyl)benzene-1,4-diol + AH2 + O2 = a 3-demethylubiquinol + A + H2O. Its pathway is cofactor biosynthesis; ubiquinone biosynthesis. In terms of biological role, catalyzes the hydroxylation of 2-nonaprenyl-3-methyl-6-methoxy-1,4-benzoquinol during ubiquinone biosynthesis. The sequence is that of 3-demethoxyubiquinol 3-hydroxylase from Paraburkholderia phytofirmans (strain DSM 17436 / LMG 22146 / PsJN) (Burkholderia phytofirmans).